Here is a 937-residue protein sequence, read N- to C-terminus: FNIP repeat-containing protein DDB_G0271996 (937 aa).

Residues 1–12 (MQQPISIQQPVV) show a composition bias toward polar residues. Residues 1-60 (MQQPISIQQPVVNNINNSPNNQANINNNTTNNTNNNNNNNNTTNNIANNNNSNNINNNNE) form a disordered region. The span at 13–60 (NNINNSPNNQANINNNTTNNTNNNNNNNNTTNNIANNNNSNNINNNNE) shows a compositional bias: low complexity. FNIP repeat units follow at residues 307–350 (FNQP…LGQR), 354–394 (PIPI…TLDN), 396–439 (FNQP…FHQN), and 598–640 (YNHQ…RVKS). Residues 677-769 (VEQQAQYAQQ…EEEDTNNHQH (93 aa)) adopt a coiled-coil conformation. Residues 719–729 (KQQQQQQQDNE) show a composition bias toward low complexity. 3 disordered regions span residues 719–767 (KQQQ…TNNH), 794–823 (SNNSNNYNYNNNSNNNNNNNSNEEDDEEED), and 910–937 (QNQNNNNYNNNNNNNNNNNNNKKKNVKK). Acidic residues predominate over residues 751 to 763 (LEEEQENEEEEED). Composition is skewed to low complexity over residues 794–814 (SNNSNNYNYNNNSNNNNNNNS) and 910–929 (QNQNNNNYNNNNNNNNNNNN). The stretch at 902–937 (ICNNINQNQNQNNNNYNNNNNNNNNNNNNKKKNVKK) forms a coiled coil.

This chain is FNIP repeat-containing protein DDB_G0271996, found in Dictyostelium discoideum (Social amoeba).